We begin with the raw amino-acid sequence, 127 residues long: Large ribosomal subunit protein bL20 (127 aa).

The protein belongs to the bacterial ribosomal protein bL20 family.

In terms of biological role, binds directly to 23S ribosomal RNA and is necessary for the in vitro assembly process of the 50S ribosomal subunit. It is not involved in the protein synthesizing functions of that subunit. The sequence is that of Large ribosomal subunit protein bL20 from Corynebacterium aurimucosum (strain ATCC 700975 / DSM 44827 / CIP 107346 / CN-1) (Corynebacterium nigricans).